Reading from the N-terminus, the 357-residue chain is Homoserine kinase (357 aa).

The protein belongs to the GHMP kinase family. Homoserine kinase subfamily.

The enzyme catalyses L-homoserine + ATP = O-phospho-L-homoserine + ADP + H(+). It functions in the pathway amino-acid biosynthesis; L-threonine biosynthesis; L-threonine from L-aspartate: step 4/5. Its function is as follows. Commits homoserine to the threonine biosynthesis pathway by catalyzing its O-phosphorylation. In Cryptococcus neoformans var. grubii serotype A (strain H99 / ATCC 208821 / CBS 10515 / FGSC 9487) (Filobasidiella neoformans var. grubii), this protein is Homoserine kinase.